The primary structure comprises 815 residues: Vacuolar proton translocating ATPase 100 kDa subunit (815 aa).

Residues 1-402 (MSFLRPSIWR…NAYGIAHYRE (402 aa)) are Cytoplasmic-facing. A helical transmembrane segment spans residues 403–421 (VNPAVLTIVTFPFLFGVMF). Topologically, residues 422–423 (GD) are vacuolar. A helical transmembrane segment spans residues 424–440 (VGHGALLLLSALGLISL). Over 441–454 (EKKLAGKKLNELIQ) the chain is Cytoplasmic. The chain crosses the membrane as a helical span at residues 455–484 (MPFDGRYVLFLMSLFSIYVGFIYNECFSIP). Residues 485 to 530 (MNIFGSQYNLNSTTGLYTYQHTDRVYPVGVDPLWKGAPNELVYYNS) are Vacuolar-facing. A helical transmembrane segment spans residues 531 to 550 (FKMKLSIIFGVVQMSVGICF). Topologically, residues 551-571 (SLLNYLNQKGPIKIVNILTQF) are cytoplasmic. Residues 572-592 (VPQMIFLWSIFGYMSVLIILK) traverse the membrane as a helical segment. Over 593 to 639 (WVVPYRSFEVDKVDPPFILPTIIAMFLSPGGTPDVVFFSGQGAVQTA) the chain is Vacuolar. The chain crosses the membrane as a helical span at residues 640-659 (LLFLALISIPVMLVIKPLFM). Topologically, residues 660–706 (KRFHFQEVERKKLGHHEEEHDDEALYTGHHGEEFEMGEVFVHQVIHT) are cytoplasmic. Residues 707 to 731 (IEFVLGAVSNTASYLRLWALSLAHS) form a helical membrane-spanning segment. The Vacuolar portion of the chain corresponds to 732–749 (ELSSVFWERILIGQVERG). Residues 750-788 (NPFLAFVGFGAWLGASVAVLLLMESLSAFLHALRLHWVE) traverse the membrane as a helical segment. Residues 789 to 815 (FQNKFYIGDGVRFIPYSATRILSEDDE) lie on the Cytoplasmic side of the membrane.

The protein belongs to the V-ATPase 116 kDa subunit family. As to quaternary structure, the V-ATPase is a heteromultimeric enzyme.

It localises to the cytoplasmic vesicle membrane. The protein localises to the endosome membrane. The protein resides in the vacuole membrane. It is found in the lysosome membrane. Essential component of the vacuolar proton pump (V-ATPase), a multimeric enzyme that catalyzes the translocation of protons across the membranes. Required for assembly and activity of the V-ATPase. Required in both the contractile vacuole system and the endosomal/lysosomal system. Also required for cytosolic pH regulation. The protein is Vacuolar proton translocating ATPase 100 kDa subunit (vatM) of Dictyostelium discoideum (Social amoeba).